Consider the following 215-residue polypeptide: MGRGKIEIKRIENSTNRQVTFSKRRAGILKKAREIGVLCDAEVGVVIFSSAGKLSDYCTPKTTSVFPPLSRILEKYQTNSGKILWDEKHKSLSAEIDRVKKENDNMQIELRHMKGEDLNSLQPKELIAIEEALNNGQANLRDKMMDHWRMHKRNEKMLEDEHKMLAFRVHQQEVELSGGIRELELGYHHDDRDFAASMPFTFRVQPSHPNLQQEK.

An MADS-box domain is found at 1–61 (MGRGKIEIKR…GKLSDYCTPK (61 aa)). The 87-residue stretch at 89–175 (HKSLSAEIDR…AFRVHQQEVE (87 aa)) folds into the K-box domain.

As to quaternary structure, may interact with the K-box of MADS16. Highly expressed in lodicules, at intermediate levels in stamens, and weakly in carpels. Expressed in pollen.

Its subcellular location is the nucleus. Its function is as follows. Probable transcription factor involved in the development of floral organs. B-class protein required for normal development of lodicules and stamens (whorls 2 and 3). May function as a heterodimer with MADS16. This Oryza sativa subsp. japonica (Rice) protein is MADS-box transcription factor 4 (MADS4).